The chain runs to 295 residues: Ribosomal protein L11 methyltransferase (295 aa).

S-adenosyl-L-methionine is bound by residues threonine 146, glycine 167, aspartate 189, and asparagine 231.

This sequence belongs to the methyltransferase superfamily. PrmA family.

Its subcellular location is the cytoplasm. The enzyme catalyses L-lysyl-[protein] + 3 S-adenosyl-L-methionine = N(6),N(6),N(6)-trimethyl-L-lysyl-[protein] + 3 S-adenosyl-L-homocysteine + 3 H(+). Its function is as follows. Methylates ribosomal protein L11. This chain is Ribosomal protein L11 methyltransferase, found in Vibrio vulnificus (strain CMCP6).